Reading from the N-terminus, the 340-residue chain is MREQLDQIRREAAEALCAVDTMEALQDWRVRILGKKGVLTGILRGLGALPAEERPLMGALVNEVRAELEFKLEEKSRELKAREKEARLSGESIDITLPGRVQPVGGKHPLTLVIDEIKQIFLGMGYEIAEGPEVELDYYNFEALNLPQDHPARDMQDSFYITSDILLRTHTSPVQIRAMERIRPQLPVKVICPGRVFRRDDDATHSPMFHQVEGLVVDKGITFGDLRGTLLTFARQMFGPDREIRLRPSFFPFTEPSAEVDISCVICGGGGCRVCKGSGWLEILGSGMVHPRVLEYGGYNPQEVTGFAFGMGVERIAMLKYGIDDMRLLYENDMRFLAQF.

Glu-255 contacts Mg(2+).

This sequence belongs to the class-II aminoacyl-tRNA synthetase family. Phe-tRNA synthetase alpha subunit type 1 subfamily. As to quaternary structure, tetramer of two alpha and two beta subunits. The cofactor is Mg(2+).

The protein localises to the cytoplasm. The enzyme catalyses tRNA(Phe) + L-phenylalanine + ATP = L-phenylalanyl-tRNA(Phe) + AMP + diphosphate + H(+). The polypeptide is Phenylalanine--tRNA ligase alpha subunit (Heliobacterium modesticaldum (strain ATCC 51547 / Ice1)).